Reading from the N-terminus, the 137-residue chain is Putative pre-16S rRNA nuclease (137 aa).

The protein belongs to the YqgF nuclease family.

It is found in the cytoplasm. In terms of biological role, could be a nuclease involved in processing of the 5'-end of pre-16S rRNA. In Buchnera aphidicola subsp. Baizongia pistaciae (strain Bp), this protein is Putative pre-16S rRNA nuclease.